The sequence spans 222 residues: Cytochrome b6 (222 aa).

Residues isoleucine 39–phenylalanine 59 form a helical membrane-spanning segment. Cysteine 42 provides a ligand contact to heme c. Histidine 93 and histidine 107 together coordinate heme b. The next 3 helical transmembrane spans lie at alanine 97–phenylalanine 117, leucine 123–tyrosine 143, and leucine 193–isoleucine 213. Residues histidine 194 and histidine 209 each coordinate heme b.

The protein belongs to the cytochrome b family. PetB subfamily. In terms of assembly, the 4 large subunits of the cytochrome b6-f complex are cytochrome b6, subunit IV (17 kDa polypeptide, PetD), cytochrome f and the Rieske protein, while the 4 small subunits are PetG, PetL, PetM and PetN. The complex functions as a dimer. Heme b serves as cofactor. The cofactor is heme c.

Its subcellular location is the cellular thylakoid membrane. Component of the cytochrome b6-f complex, which mediates electron transfer between photosystem II (PSII) and photosystem I (PSI), cyclic electron flow around PSI, and state transitions. The chain is Cytochrome b6 from Rippkaea orientalis (strain PCC 8801 / RF-1) (Cyanothece sp. (strain PCC 8801)).